We begin with the raw amino-acid sequence, 151 residues long: Shadow of prion protein (151 aa).

The signal sequence occupies residues 1–24 (MNWAPATCWALLLAAAFLCDSGAA). Positions 89–113 (WRRAAGPGERGLEDEEDGVPGGNGT) are disordered. N-linked (GlcNAc...) asparagine glycosylation is present at asparagine 111. Glycine 126 is lipidated: GPI-anchor amidated glycine. Residues 127-151 (AGPTRGPRLCLVLGGALGALGLLRP) constitute a propeptide, removed in mature form.

This sequence belongs to the SPRN family. N-glycosylated. In terms of tissue distribution, mainly expressed in brain. In brain, it is expressed in hippocampus.

The protein localises to the cell membrane. Its function is as follows. Prion-like protein that has PrP(C)-like neuroprotective activity. May act as a modulator for the biological actions of normal and abnormal PrP. In Homo sapiens (Human), this protein is Shadow of prion protein (SPRN).